A 246-amino-acid polypeptide reads, in one-letter code: MSKQDEQANRLKTRLGFKWHNPTLLIQALTHSSCVHENRGHGLCHNQRLEFLGDAVLELIISEHLYKMFPDRTEGELTKMRASSVCEPSLAKVARGLDLGRCLRMGRGEERSGGRERPSILADAFEALLGAIYLDQGLEISRHFVLNCLSSIIDDVVAGRLDRDYKTELQEILQQSSPDPLTYTIMDESGPDHDKTFTAGVIYKGKVIGKGSGHSKKEAEQQAAKDAFQHLEGMGKSGHKSAGPIR.

An RNase III domain is found at 8–137; that stretch reads ANRLKTRLGF…LLGAIYLDQG (130 aa). Glutamate 50 is a Mg(2+) binding site. Aspartate 54 is an active-site residue. The Mg(2+) site is built by aspartate 123 and glutamate 126. The active site involves glutamate 126. The DRBM domain occupies 164-233; it reads DYKTELQEIL…AKDAFQHLEG (70 aa). The tract at residues 212 to 246 is disordered; sequence SGHSKKEAEQQAAKDAFQHLEGMGKSGHKSAGPIR.

This sequence belongs to the ribonuclease III family. As to quaternary structure, homodimer. It depends on Mg(2+) as a cofactor.

The protein resides in the cytoplasm. The enzyme catalyses Endonucleolytic cleavage to 5'-phosphomonoester.. Digests double-stranded RNA. Involved in the processing of primary rRNA transcript to yield the immediate precursors to the large and small rRNAs (23S and 16S). Processes some mRNAs, and tRNAs when they are encoded in the rRNA operon. Processes pre-crRNA and tracrRNA of type II CRISPR loci if present in the organism. This chain is Ribonuclease 3, found in Desulforamulus reducens (strain ATCC BAA-1160 / DSM 100696 / MI-1) (Desulfotomaculum reducens).